Reading from the N-terminus, the 264-residue chain is Small ribosomal subunit protein uS2 (264 aa).

Belongs to the universal ribosomal protein uS2 family.

This chain is Small ribosomal subunit protein uS2, found in Synechococcus sp. (strain JA-2-3B'a(2-13)) (Cyanobacteria bacterium Yellowstone B-Prime).